Consider the following 96-residue polypeptide: Protein RSI-1 (96 aa).

The first 29 residues, 1–29 (MAKSGYNASFLLLISMFLILLTFSNVVEG), serve as a signal peptide directing secretion.

This sequence belongs to the GASA family. Six disulfide bonds may be present. In terms of tissue distribution, expressed very early in lateral root development.

The protein resides in the secreted. The chain is Protein RSI-1 (RSI-1) from Solanum lycopersicum (Tomato).